Here is a 391-residue protein sequence, read N- to C-terminus: Curcumin synthase 2 (391 aa).

The active site involves Cys166.

It belongs to the thiolase-like superfamily. Chalcone/stilbene synthases family. Homodimer.

It carries out the reaction (E)-feruloylacetyl-CoA + (E)-feruloyl-CoA + H2O = curcumin + CO2 + 2 CoA. It functions in the pathway secondary metabolite biosynthesis; flavonoid biosynthesis. Functionally, catalyzes the synthesis of curcumin by condensing feruloyl-CoA with a diketide-CoA in the curcuminoid biosynthesis. The chain is Curcumin synthase 2 (CURS2) from Curcuma longa (Turmeric).